Reading from the N-terminus, the 167-residue chain is Insertion element IS1 1 protein InsB (167 aa).

It belongs to the transposase 27 family.

Absolutely required for transposition of IS1. The protein is Insertion element IS1 1 protein InsB (insB1) of Escherichia coli (strain K12).